The following is a 320-amino-acid chain: Cytochrome f (320 aa).

A signal peptide spans 1 to 35; it reads MQTRKTLSWIKEEITRSISVSLMIYIITGAYISNA. Residues Tyr36, Cys56, Cys59, and His60 each contribute to the heme site. The chain crosses the membrane as a helical span at residues 286–306; that stretch reads VQGLLFFLASVILAQIFLVLK.

It belongs to the cytochrome f family. As to quaternary structure, the 4 large subunits of the cytochrome b6-f complex are cytochrome b6, subunit IV (17 kDa polypeptide, petD), cytochrome f and the Rieske protein, while the 4 small subunits are PetG, PetL, PetM and PetN. The complex functions as a dimer. Heme is required as a cofactor.

The protein localises to the plastid. It is found in the chloroplast thylakoid membrane. Component of the cytochrome b6-f complex, which mediates electron transfer between photosystem II (PSII) and photosystem I (PSI), cyclic electron flow around PSI, and state transitions. This chain is Cytochrome f, found in Populus alba (White poplar).